We begin with the raw amino-acid sequence, 430 residues long: MSSIVAIKGFNDVLPTQTAAWRRLEQHLASLMDAYGYQQIRLPIVEQTGLFKRAIGDATDIVEKEMYTFFDKGNPPESLTLRPEGTAGCVRALVEHNLLRGATPRVWYMGPMFRYEKPQKGRYRQFHQFGVETFGVATPDIEAEVILMTARLWKRMGVAHMVQLELNTLGEKEERTEYRNALVAFLNEHKDALDEDSQRRLTTNPLRILDSKIESTQKILENAPKLYDFLKEDSLSHFQQLQDYLTAAGIKFVINQKLVRGLDYYNKTVFEWTTTALGSQGTVCGGGRYDGLVGQLKGKADQSVPAVGFGMGMERLLLLIEQVEQAEIVRDCEAFLVAEPAYQSKALVLAEQLRDQLEAANSNIRIKTGSQGSMKSQMKKADQAGAVYAIILGEREWEAQQLAIKELATAEQSQVALAELVPFLIEKFTK.

Belongs to the class-II aminoacyl-tRNA synthetase family. In terms of assembly, homodimer.

It is found in the cytoplasm. The enzyme catalyses tRNA(His) + L-histidine + ATP = L-histidyl-tRNA(His) + AMP + diphosphate + H(+). The sequence is that of Histidine--tRNA ligase from Acinetobacter baumannii (strain ATCC 17978 / DSM 105126 / CIP 53.77 / LMG 1025 / NCDC KC755 / 5377).